The primary structure comprises 369 residues: tRNA-specific 2-thiouridylase MnmA (369 aa).

ATP-binding positions include 7–14 (GISGGVDS) and methionine 33. Positions 93-95 (NPD) are interaction with target base in tRNA. Cysteine 98 serves as the catalytic Nucleophile. The cysteines at positions 98 and 195 are disulfide-linked. Glycine 123 serves as a coordination point for ATP. Residues 145–147 (KDQ) form an interaction with tRNA region. Cysteine 195 (cysteine persulfide intermediate) is an active-site residue. The segment at 307 to 308 (RY) is interaction with tRNA.

This sequence belongs to the MnmA/TRMU family. In terms of assembly, interacts with TusE.

It is found in the cytoplasm. The catalysed reaction is S-sulfanyl-L-cysteinyl-[protein] + uridine(34) in tRNA + AH2 + ATP = 2-thiouridine(34) in tRNA + L-cysteinyl-[protein] + A + AMP + diphosphate + H(+). Catalyzes the 2-thiolation of uridine at the wobble position (U34) of tRNA(Lys), tRNA(Glu) and tRNA(Gln), leading to the formation of s(2)U34, the first step of tRNA-mnm(5)s(2)U34 synthesis. Sulfur is provided by IscS, via a sulfur-relay system. Binds ATP and its substrate tRNAs. The chain is tRNA-specific 2-thiouridylase MnmA from Blochmanniella floridana.